A 1165-amino-acid polypeptide reads, in one-letter code: Adhesion G-protein coupled receptor G6 (1165 aa).

Residues 1 to 30 (MMFDTLGKRCCPWRLKPSALLFLFVLCVTC) form the signal peptide. At 31 to 832 (VPLSVCGCGS…ASQIDGRNTK (802 aa)) the chain is on the extracellular side. Cys-41 and Cys-67 are disulfide-bonded. The CUB domain maps to 41–149 (CRLVLSNPSG…KGFNASYIRV (109 aa)). The Ca(2+) site is built by Glu-89 and Asp-97. The cysteines at positions 94 and 111 are disulfide-linked. The N-linked (GlcNAc...) asparagine glycan is linked to Asn-121. Positions 134, 136, and 137 each coordinate Ca(2+). N-linked (GlcNAc...) asparagine glycosylation is present at Asn-143. In terms of domain architecture, Pentraxin (PTX) spans 154–356 (RNQKVILPQT…ALKAEGNLSC (203 aa)). 2 cysteine pairs are disulfide-bonded: Cys-186/Cys-254 and Cys-231/Cys-277. Residues Asn-258, Asn-314, Asn-324, Asn-353, Asn-370, Asn-410, Asn-417, Asn-424, Asn-458, Asn-462, and Asn-478 are each glycosylated (N-linked (GlcNAc...) asparagine). The interval 446 to 807 (DKRLVLWALL…LDAGETICLC (362 aa)) is mediates interaction with laminin-2. Intrachain disulfides connect Cys-498–Cys-533 and Cys-521–Cys-550. N-linked (GlcNAc...) asparagine glycosylation is found at Asn-536, Asn-549, Asn-563, Asn-570, Asn-665, Asn-674, Asn-720, Asn-746, Asn-781, and Asn-788. Residues 640–823 (PHVNIETQNL…GVLMDLPRSA (184 aa)) form the GAIN-B domain. Cystine bridges form between Cys-773–Cys-805 and Cys-792–Cys-807. The tract at residues 773-823 (CAFWDMNKNKSFGGWNTSGCVAHSDLDAGETICLCSHFTHFGVLMDLPRSA) is GPS. Residues 812–820 (HFGVLMDLP) form a stachel region. Residues 833–853 (VLTFITYIGCGISAIFSAATL) traverse the membrane as a helical segment. Over 854–873 (LTYVAFEKLRRDYPSKILMN) the chain is Cytoplasmic. Residues 874–894 (LSSALLFLNLIFLLDGWVTSF) traverse the membrane as a helical segment. Residues 895–899 (GVAGL) are Extracellular-facing. Residues 900-920 (CTAVAALLHFFLLATFTWMGL) form a helical membrane-spanning segment. Topologically, residues 921–940 (EAIHMYIALVKVFNTYIHRY) are cytoplasmic. A helical transmembrane segment spans residues 941–961 (ILKFCIIGWGLPALVVSIILV). Over 962 to 994 (SRRQNEVYGKESYGKDQDDEFCWIQDPVVFYVS) the chain is Extracellular. Residues 995–1015 (CAGYFGVMFFLNVAMFIVVMV) form a helical membrane-spanning segment. Residues 1016–1039 (QICGRNGKRSNRTLREEVLRNLRS) are Cytoplasmic-facing. A helical transmembrane segment spans residues 1040-1060 (VVSLTFLLGMTWGFAFFAWGP). Residues 1061 to 1062 (LN) are Extracellular-facing. A helical transmembrane segment spans residues 1063–1083 (IPFMYLFSIFNSLQGLFIFIF). Asn-1073 is a 17alpha-hydroxyprogesterone binding site. Topologically, residues 1084 to 1165 (HCAMKENVQK…KRNSHSDNFS (82 aa)) are cytoplasmic. Residues 1126–1154 (NLGKSLSSSSIGSNSTYLTSKSKSSSTTY) are compositionally biased toward low complexity. The disordered stretch occupies residues 1126–1165 (NLGKSLSSSSIGSNSTYLTSKSKSSSTTYFKRNSHSDNFS). Ser-1135 and Ser-1138 each carry phosphoserine.

This sequence belongs to the G-protein coupled receptor 2 family. Adhesion G-protein coupled receptor (ADGR) subfamily. In terms of assembly, heterodimer of 2 chains generated by proteolytic processing; the large extracellular N-terminal fragment and the membrane-bound C-terminal fragment predominantly remain associated and non-covalently linked. Interacts with Laminin-2; this interaction stabilizes the receptor in an inactive state. Laminin-2 polymerization could facilitate ADGRG6-NTF removal, thereby exposing the tethered agonist to drive myelination. Interacts with PRNP. Interacts with ITGB1. Interacts with LRP1. Post-translationally, proteolytically cleaved into 2 conserved sites: one in the GPS region of the GAIN-B domain (S1 site) and the other in the middle of the extracellular domain (S2 site). The proteolytic cleavage at S1 site generates an extracellular subunit and a seven-transmembrane subunit. Furin is involved in the cleavage of the S2 site generating a soluble fragment. Processing at the GPS region occurred independent of and probably prior to the cleavage at the S2 site. Proteolytic cleavage is required for activation of the receptor. Expressed at high levels in the heart, somite and otic vesicle during embryogenesis and in adult lung.

It is found in the cell membrane. Forms a heterodimer of 2 chains generated by proteolytic processing that remain associated through non-covalent interactions mediated by the GAIN-B domain. In the inactivated receptor, the Stachel sequence (also named stalk) is embedded in the GAIN-B domain, where it adopts a beta-strand conformation. On activation, the Stachel moves into the 7 transmembrane region and adopts a twisted hook-shaped configuration that forms contacts within the receptor, leading to coupling of a G-alpha protein, which activates signaling. The cleaved GAIN-B and N-terminal domains can then dissociate from the rest of the receptor. Functionally, adhesion G-protein coupled receptor (aGPCR) for steroid hormones, such as progesterone and 17alpha-hydroxyprogesterone (17OHP). Involved in many biological processes, such as myelination, sprouting angiogenesis, placenta, ear and cartilage development. Ligand binding causes a conformation change that triggers signaling via guanine nucleotide-binding proteins (G proteins) and modulates the activity of downstream effectors, such as adenylate cyclase. ADGRG6 is coupled to G(i) G alpha proteins and mediates inhibition of adenylate cyclase. Also able to couple to G(q) G proteins. Involved in myelination of the peripheral nervous system: required for differentiation of promyelinating Schwann cells and for normal myelination of axons. Also acts as a regulator of body length and bone mass. Acts as a regulator of blood-brain barrier formation in the central nervous system vie its association with LRP1 and ITGB1. The protein is Adhesion G-protein coupled receptor G6 of Mus musculus (Mouse).